The chain runs to 460 residues: Argininosuccinate lyase (460 aa).

This sequence belongs to the lyase 1 family. Argininosuccinate lyase subfamily.

Its subcellular location is the cytoplasm. It carries out the reaction 2-(N(omega)-L-arginino)succinate = fumarate + L-arginine. The protein operates within amino-acid biosynthesis; L-arginine biosynthesis; L-arginine from L-ornithine and carbamoyl phosphate: step 3/3. The sequence is that of Argininosuccinate lyase from Actinobacillus succinogenes (strain ATCC 55618 / DSM 22257 / CCUG 43843 / 130Z).